The sequence spans 288 residues: ATP synthase gamma chain (288 aa).

Belongs to the ATPase gamma chain family. In terms of assembly, F-type ATPases have 2 components, CF(1) - the catalytic core - and CF(0) - the membrane proton channel. CF(1) has five subunits: alpha(3), beta(3), gamma(1), delta(1), epsilon(1). CF(0) has three main subunits: a, b and c.

It localises to the cell membrane. In terms of biological role, produces ATP from ADP in the presence of a proton gradient across the membrane. The gamma chain is believed to be important in regulating ATPase activity and the flow of protons through the CF(0) complex. The polypeptide is ATP synthase gamma chain (Shouchella clausii (strain KSM-K16) (Alkalihalobacillus clausii)).